Here is a 484-residue protein sequence, read N- to C-terminus: UDP-N-acetylmuramoyl-L-alanyl-D-glutamate--L-lysine ligase (484 aa).

UDP-N-acetyl-alpha-D-muramoyl-L-alanyl-D-glutamate is bound at residue Ser-43. ATP is bound at residue 119-125 (GTKGKTT). UDP-N-acetyl-alpha-D-muramoyl-L-alanyl-D-glutamate contacts are provided by residues 161-162 (TT), Ser-188, and Arg-196. Lys-230 is subject to N6-carboxylysine. Residues 405–408 (DDPN) carry the L-lysine recognition motif motif.

The protein belongs to the MurCDEF family. MurE subfamily. In terms of processing, carboxylation is probably crucial for Mg(2+) binding and, consequently, for the gamma-phosphate positioning of ATP.

It localises to the cytoplasm. It carries out the reaction UDP-N-acetyl-alpha-D-muramoyl-L-alanyl-D-glutamate + L-lysine + ATP = UDP-N-acetyl-alpha-D-muramoyl-L-alanyl-gamma-D-glutamyl-L-lysine + ADP + phosphate + H(+). Its pathway is cell wall biogenesis; peptidoglycan biosynthesis. In terms of biological role, catalyzes the addition of L-lysine to the nucleotide precursor UDP-N-acetylmuramoyl-L-alanyl-D-glutamate (UMAG) in the biosynthesis of bacterial cell-wall peptidoglycan. This chain is UDP-N-acetylmuramoyl-L-alanyl-D-glutamate--L-lysine ligase, found in Streptococcus agalactiae serotype V (strain ATCC BAA-611 / 2603 V/R).